Reading from the N-terminus, the 535-residue chain is Bifunctional purine biosynthesis protein PurH (535 aa).

Residues 6 to 151 enclose the MGS-like domain; sequence TRLPIRRALI…KNHKDVAIVV (146 aa).

Belongs to the PurH family.

The enzyme catalyses (6R)-10-formyltetrahydrofolate + 5-amino-1-(5-phospho-beta-D-ribosyl)imidazole-4-carboxamide = 5-formamido-1-(5-phospho-D-ribosyl)imidazole-4-carboxamide + (6S)-5,6,7,8-tetrahydrofolate. The catalysed reaction is IMP + H2O = 5-formamido-1-(5-phospho-D-ribosyl)imidazole-4-carboxamide. Its pathway is purine metabolism; IMP biosynthesis via de novo pathway; 5-formamido-1-(5-phospho-D-ribosyl)imidazole-4-carboxamide from 5-amino-1-(5-phospho-D-ribosyl)imidazole-4-carboxamide (10-formyl THF route): step 1/1. The protein operates within purine metabolism; IMP biosynthesis via de novo pathway; IMP from 5-formamido-1-(5-phospho-D-ribosyl)imidazole-4-carboxamide: step 1/1. The chain is Bifunctional purine biosynthesis protein PurH from Pseudomonas entomophila (strain L48).